A 285-amino-acid polypeptide reads, in one-letter code: Sulfotransferase 2A1 (285 aa).

Residues Lys44, Ser45, Gly46, Thr47, Asn48, and Trp49 each contribute to the 3'-phosphoadenylyl sulfate site. His99 functions as the Proton acceptor in the catalytic mechanism. 3'-phosphoadenylyl sulfate-binding residues include Arg121, Ser129, Tyr184, Ser218, Met223, Arg247, Lys248, and Gly249. Ser251 bears the Phosphoserine mark.

It belongs to the sulfotransferase 1 family. In terms of assembly, homodimer. Post-translationally, the N-terminus is blocked. Liver, adrenal and at lower level in the kidney. Is present in human fetus in higher level in the adrenal than the liver and the kidney.

The protein localises to the cytoplasm. It carries out the reaction an alcohol + 3'-phosphoadenylyl sulfate = an alkyl sulfate + adenosine 3',5'-bisphosphate + H(+). It catalyses the reaction (24S)-hydroxycholesterol + 3'-phosphoadenylyl sulfate = (24S)-hydroxycholesterol 24-sulfate + adenosine 3',5'-bisphosphate + H(+). The catalysed reaction is (24S)-hydroxycholesterol + 3'-phosphoadenylyl sulfate = (24S)-hydroxycholesterol 3-sulfate + adenosine 3',5'-bisphosphate + H(+). The enzyme catalyses (24S)-hydroxycholesterol 24-sulfate + 3'-phosphoadenylyl sulfate = (24S)-hydroxycholesterol 3,24-disulfate + adenosine 3',5'-bisphosphate + H(+). It carries out the reaction 3beta-hydroxyandrost-5-en-17-one + 3'-phosphoadenylyl sulfate = dehydroepiandrosterone 3-sulfate + adenosine 3',5'-bisphosphate + H(+). It catalyses the reaction pregnenolone + 3'-phosphoadenylyl sulfate = pregnenolone sulfate + adenosine 3',5'-bisphosphate + H(+). The catalysed reaction is androsterone + 3'-phosphoadenylyl sulfate = androsterone 3alpha-sulfate + adenosine 3',5'-bisphosphate + H(+). The enzyme catalyses taurolithocholate + 3'-phosphoadenylyl sulfate = taurolithocholate 3-sulfate + adenosine 3',5'-bisphosphate + H(+). It carries out the reaction lithocholate + 3'-phosphoadenylyl sulfate = lithocholate sulfate + adenosine 3',5'-bisphosphate + H(+). With respect to regulation, subject to substrate inhibition. Alternate orientations for binding of steroid substrates to SULT2A1 may play a role in substrate inhibition. In terms of biological role, sulfotransferase that utilizes 3'-phospho-5'-adenylyl sulfate (PAPS) as sulfonate donor to catalyze the sulfonation of steroids and bile acids in the liver and adrenal glands. Mediates the sulfation of a wide range of steroids and sterols, including pregnenolone, androsterone, DHEA, bile acids, cholesterol and as well many xenobiotics that contain alcohol and phenol functional groups. Sulfonation increases the water solubility of most compounds, and therefore their renal excretion, but it can also result in bioactivation to form active metabolites. Plays an important role in maintening steroid and lipid homeostasis. Plays a key role in bile acid metabolism. In addition, catalyzes the metabolic activation of potent carcinogenic polycyclic arylmethanols. The protein is Sulfotransferase 2A1 (SULT2A1) of Homo sapiens (Human).